The chain runs to 273 residues: E3 ubiquitin-protein ligase SDIR1 (273 aa).

At 1–33 the chain is on the cytoplasmic side; that stretch reads MSFVFRGSRGDLESGFSGGFLPERRAMRVHGAR. The chain crosses the membrane as a helical span at residues 34–54; it reads PVNSNSLAFLVTVLLLFMILN. The Lumenal segment spans residues 55–56; the sequence is SH. Residues 57–77 form a helical membrane-spanning segment; that stretch reads QMPPNFLLWLVLGVFLMATTL. Residues 78–273 lie on the Cytoplasmic side of the membrane; it reads RMYATCQQLQ…EIDDDASDMV (196 aa). The RING-type; atypical zinc-finger motif lies at 211 to 252; the sequence is CSVCLEQVTVGEIVRTLPCLHQFHAGCIDPWLRQQGTCPVCK.

In terms of assembly, interacts with ATP1/SDIRIP1. In terms of tissue distribution, ubiquitous.

The protein resides in the endoplasmic reticulum membrane. It catalyses the reaction S-ubiquitinyl-[E2 ubiquitin-conjugating enzyme]-L-cysteine + [acceptor protein]-L-lysine = [E2 ubiquitin-conjugating enzyme]-L-cysteine + N(6)-ubiquitinyl-[acceptor protein]-L-lysine.. Functionally, E3 ubiquitin-protein ligase that acts as a positive regulator of abscisic acid-related stress signal transduction. Interacts with and ubiquitinates ATP1/SDIRIP1 to modulate ATP1/SDIRIP1 stability through the 26S proteasome pathway. Regulates abscisic acid (ABA) and salt stress responses by negatively affecting ATP1/SDIRIP1 stability. The SDIR1-ATP1/SDIRIP1 complex plays an important role in ABA signaling through the ubiquitination pathway. The sequence is that of E3 ubiquitin-protein ligase SDIR1 from Arabidopsis thaliana (Mouse-ear cress).